The primary structure comprises 826 residues: E3 ubiquitin ligase PARAQUAT TOLERANCE 3 (826 aa).

The DWNN domain occupies 3–76 (IYYKFKSARD…NTSVLIRRVP (74 aa)). The CCHC-type zinc finger occupies 203–216 (CHRCNVSGHFIQHC). Phosphoserine is present on serine 278. An RING-type; degenerate zinc finger spans residues 288 to 326 (CPLCKEVMRDAALASKCCLKSYCDKCIRDHIIAKSMCVC). Composition is skewed to polar residues over residues 356 to 365 (SAENAGSMCQ), 396 to 406 (PSNNNETSTLK), and 435 to 454 (NIQG…NTQP). Disordered stretches follow at residues 356 to 406 (SAEN…STLK), 435 to 488 (NIQG…GPDY), and 585 to 826 (HPIM…RARA). The residue at position 397 (serine 397) is a Phosphoserine. The segment covering 588–624 (MGREEFEAKKTEMKRKRENEIRRSEGGNVVRDSEKSR) has biased composition (basic and acidic residues). Residues 625–635 (IMNNSAVTSSP) show a composition bias toward polar residues. The span at 651 to 667 (DYDRRRRSDRSSPERQS) shows a compositional bias: basic and acidic residues. Short sequence motifs (nuclear localization signal) lie at residues 668–675 (SRRFTSPP) and 695–702 (DRRRDRPR). Basic and acidic residues predominate over residues 680 to 706 (RKSERDRHHDLDSEHDRRRDRPRETDR). A compositionally biased stretch (basic residues) spans 790–799 (FKRKPSRYKR). The residue at position 800 (serine 800) is a Phosphoserine. The span at 809 to 826 (GDEHFRHSKRSKGERARA) shows a compositional bias: basic and acidic residues.

In terms of assembly, interacts with PRMT13/PRMT4B in the nucleus. Expressed constitutively in both shoot and root tissues.

Its subcellular location is the nucleus. The catalysed reaction is S-ubiquitinyl-[E2 ubiquitin-conjugating enzyme]-L-cysteine + [acceptor protein]-L-lysine = [E2 ubiquitin-conjugating enzyme]-L-cysteine + N(6)-ubiquitinyl-[acceptor protein]-L-lysine.. Functionally, E3 ubiquitin ligase acting as a negative regulator of oxidative stress tolerance, probably by mediating 26S proteasome-mediated degradation of PRMT13/PRMT4B, thus preventing APX1 and GPX1 accumulation via the reduction of histone H3 methylation (H3R17me2a). Confers sensitivity to cadmium CdCl(2) and salt NaCl stresses. The chain is E3 ubiquitin ligase PARAQUAT TOLERANCE 3 from Arabidopsis thaliana (Mouse-ear cress).